We begin with the raw amino-acid sequence, 496 residues long: Pre-glycoprotein polyprotein GP complex (496 aa).

Residue glycine 2 is the site of N-myristoyl glycine; by host attachment. Topologically, residues 2–17 (GQLISFFQEIPVFLQE) are extracellular. The chain crosses the membrane as a helical span at residues 18 to 32 (ALNIALVAVSLIAVI). A topological domain (cytoplasmic) is located at residue lysine 33. The chain crosses the membrane as a helical span at residues 34–53 (GIINLYKSGLFQFIFFLLLA). Extracellular segments follow at residues 54–58 (GRSCS) and 59–435 (DGTF…TLVD). Position 57 (cysteine 57) interacts with Zn(2+). Residues asparagine 83, asparagine 95, asparagine 137, asparagine 166, and asparagine 178 are each glycosylated (N-linked (GlcNAc...) asparagine; by host). 6 disulfides stabilise this stretch: cysteine 92-cysteine 237, cysteine 135-cysteine 164, cysteine 207-cysteine 213, cysteine 282-cysteine 295, cysteine 304-cysteine 313, and cysteine 367-cysteine 388. N-linked (GlcNAc...) asparagine; by host glycosylation is found at asparagine 368, asparagine 376, asparagine 393, and asparagine 398. Residues 436–456 (ICFWSTVFFTASLFLHLVGIP) form a helical membrane-spanning segment. Residues 457-496 (THRHLKGEACPLPHKLDSFGGCRCGKYPRLRKPTIWHKRH) are Cytoplasmic-facing. Histidine 458, histidine 460, cysteine 466, histidine 470, cysteine 478, cysteine 480, and histidine 496 together coordinate Zn(2+).

The protein belongs to the arenaviridae GPC protein family. As to quaternary structure, homotetramer; disulfide-linked. Interacts with host TFRC. Homotetramer. GP2 homotetramers bind through ionic interactions with GP1 homotetramers to form the GP complex together with the stable signal peptide. The GP-C polyprotein interacts with the host protease MBTPS1/SKI-1 resulting in the polyprotein processing. Specific enzymatic cleavages in vivo yield mature proteins. GP-C polyprotein is cleaved in the endoplasmic reticulum by the host protease MBTPS1. Only cleaved glycoprotein is incorporated into virions. Post-translationally, the SSP remains stably associated with the GP complex following cleavage by signal peptidase and plays crucial roles in the trafficking of GP through the secretory pathway. In terms of processing, myristoylation is necessary for GP2-mediated fusion activity.

The protein localises to the virion membrane. It localises to the host endoplasmic reticulum membrane. The protein resides in the host Golgi apparatus membrane. Its subcellular location is the host cell membrane. Functionally, class I viral fusion protein that directs fusion of viral and host endosomal membranes, leading to delivery of the nucleocapsid into the cytoplasm. Membrane fusion is mediated by irreversible conformational changes induced upon acidification in the endosome. In terms of biological role, stable signal peptide (SSP): cleaved and functions as a signal peptide. In addition, it is also retained as the third component of the GP complex. The SSP is required for efficient glycoprotein expression, post-translational maturation cleavage of GP1 and GP2, glycoprotein transport to the cell surface plasma membrane, formation of infectious virus particles, and acid pH-dependent glycoprotein-mediated cell fusion. Interacts with the host receptor. Mediates virus attachment to host TFRC. This attachment induces virion internalization predominantly through clathrin-mediated endocytosis. This is Pre-glycoprotein polyprotein GP complex from Machupo virus (MACV).